The sequence spans 323 residues: rRNA 2'-O-methyltransferase fibrillarin (323 aa).

The segment at 1–80 (MGFERGGRGG…AKGGAAGKKV (80 aa)) is disordered. Asymmetric dimethylarginine occurs at positions 5, 8, 12, 16, 23, 26, 30, 34, 41, 47, 49, 53, 57, 62, 64, and 68. Over residues 8-76 (RGGARGGGRG…ARGGAKGGAA (69 aa)) the composition is skewed to gly residues. S-adenosyl-L-methionine is bound by residues 174–175 (TS), 193–194 (EF), 218–219 (DA), and 238–241 (DVAQ).

Belongs to the methyltransferase superfamily. Fibrillarin family. Component of box C/D small nucleolar ribonucleoprotein (snoRNP) particles. By homology to other fibrillarins, some or all of the N-terminal domain arginines are modified to asymmetric dimethylarginine (DMA).

It is found in the nucleus. The protein localises to the nucleolus. The enzyme catalyses L-glutaminyl-[histone H2A] + S-adenosyl-L-methionine = N(5)-methyl-L-glutaminyl-[histone H2A] + S-adenosyl-L-homocysteine + H(+). Functionally, S-adenosyl-L-methionine-dependent methyltransferase that has the ability to methylate both RNAs and proteins. Involved in pre-rRNA processing. Utilizes the methyl donor S-adenosyl-L-methionine to catalyze the site-specific 2'-hydroxyl methylation of ribose moieties in pre-ribosomal RNA. Site specificity is provided by a guide RNA that base pairs with the substrate. Methylation occurs at a characteristic distance from the sequence involved in base pairing with the guide RNA. Also acts as a protein methyltransferase by mediating methylation of 'Gln-105' of histone H2A (H2AQ105me), a modification that impairs binding of the FACT complex and is specifically present at 35S ribosomal DNA locus. The protein is rRNA 2'-O-methyltransferase fibrillarin (nop-1) of Neurospora crassa (strain ATCC 24698 / 74-OR23-1A / CBS 708.71 / DSM 1257 / FGSC 987).